A 526-amino-acid chain; its full sequence is Probable lipid II flippase MurJ (526 aa).

14 helical membrane-spanning segments follow: residues 35 to 55 (LMGT…PNLF), 58 to 78 (LFAE…HYSM), 96 to 116 (AIFT…ILGA), 137 to 157 (MFPY…LHSI), 160 to 180 (FVPS…SMYF), 190 to 210 (IAAA…QLIF), 235 to 255 (IIAL…NDLV), 281 to 301 (LLGI…SFHV), 313 to 333 (LITA…FVLF), 362 to 382 (WHSV…AFYA), 391 to 411 (IAGT…FIPL), 415 to 435 (GIAF…WMFL), 459 to 479 (LFSV…AYFF), and 489 to 509 (GVPL…LLLL).

It belongs to the MurJ/MviN family.

It is found in the cell inner membrane. Its pathway is cell wall biogenesis; peptidoglycan biosynthesis. Functionally, involved in peptidoglycan biosynthesis. Transports lipid-linked peptidoglycan precursors from the inner to the outer leaflet of the cytoplasmic membrane. This chain is Probable lipid II flippase MurJ, found in Treponema pallidum (strain Nichols).